A 403-amino-acid chain; its full sequence is D-mannonate dehydratase CC0532 (403 aa).

Positions 38 and 123 each coordinate substrate. Tyrosine 160 serves as the catalytic Proton donor/acceptor. Aspartate 211 serves as a coordination point for Mg(2+). Residue histidine 213 is the Proton donor/acceptor of the active site. Mg(2+) contacts are provided by glutamate 237 and glutamate 263. Substrate is bound by residues glutamate 263, arginine 284, histidine 313, aspartate 317, and glutamate 340.

The protein belongs to the mandelate racemase/muconate lactonizing enzyme family. GalD subfamily. The cofactor is Mg(2+).

It carries out the reaction D-mannonate = 2-dehydro-3-deoxy-D-gluconate + H2O. Its pathway is carbohydrate metabolism; pentose and glucuronate interconversion. Functionally, catalyzes the dehydration of D-mannonate. Has no detectable activity with a panel of 70 other acid sugars (in vitro). The sequence is that of D-mannonate dehydratase CC0532 from Caulobacter vibrioides (strain ATCC 19089 / CIP 103742 / CB 15) (Caulobacter crescentus).